The chain runs to 953 residues: Communesin biosynthesis cluster-specific transcription factor cnsN (953 aa).

Residues 371–418 (ELESTSPRTSHSSLSQDDTASLHSRSSLSSSPGRFPPSQKLVATSDSP) are disordered. The segment covering 374 to 408 (STSPRTSHSSLSQDDTASLHSRSSLSSSPGRFPPS) has biased composition (low complexity).

The protein localises to the nucleus. Functionally, transcriptional regulator; part of the gene cluster that mediates the biosynthesis of communesins, a prominent class of indole alkaloids with great potential as pharmaceuticals. This Penicillium expansum (Blue mold rot fungus) protein is Communesin biosynthesis cluster-specific transcription factor cnsN.